The sequence spans 478 residues: Zinc finger protein 410 (478 aa).

Disordered stretches follow at residues 84–113 (PDGEETRAQTVQKSPEFLTTPESPSLLQDL) and 187–214 (NAKTGSNGENVHLGSGDGQPKDSGPLPQ). Residues 103–113 (TPESPSLLQDL) show a composition bias toward polar residues. C2H2-type zinc fingers lie at residues 219-243 (LKCTVEGCDRTFVWPAHFKYHLKTH), 249-273 (FICPAEGCGKSFYVLQRLKVHMRTH), 279-303 (FMCHESGCGKQFTTAGNLKNHRRIH), 309-333 (FLCEAQGCGRSFAEYSSLRKHLVVH), and 339-362 (HQCQVCGKTFSQSGSRNVHMRKHH). 20 residues coordinate Zn(2+): Cys221, Cys226, His239, His243, Cys251, Cys256, His269, His273, Cys281, Cys286, His299, His303, Cys311, Cys316, His329, His333, Cys341, Cys344, His357, and His361.

In terms of assembly, interacts with CDKN2A/p14ARF. Post-translationally, O-glycosylated. O-GlcNAcylation may occur in response to increasing glucose levels and affect transcription factor activity. Sumoylated. Sumoylation increases its half-life, possibly by blocking ubiquitin-mediated degradation.

It localises to the nucleus. The protein resides in the chromosome. In terms of biological role, transcription factor that binds to the sequence motif 5'-CATCCCATAATA-3', and is specifically required to silence expression of fetal hemoglobin in adult erythroid cells. Prevents expression of fetal hemoglobin genes HBG1 and HBG2 through CHD4: acts as a direct transcriptional activator of CHD4, a central component of the NuRD complex that represses transcription of fetal hemoglobin genes HBG1 and HBG2 in erythroid cells. May also activate transcription of matrix-remodeling genes such as MMP1 during fibroblast senescence. May activate transcription of the gap junction gene GJC1, perhaps in response to increasing glucose. However, recent studies suggest that ZNF410 is dedicated to regulate expression of a single gene: CHD4. This Mus musculus (Mouse) protein is Zinc finger protein 410.